The following is a 110-amino-acid chain: Envelope glycoprotein N (110 aa).

The N-terminal stretch at 1–17 (MTASTVALALFVASILG) is a signal peptide. At 18-80 (HCWVTANSTG…SLSSFSSVWA (63 aa)) the chain is on the virion surface side. Residues 28-41 (VASSTERSSPSTAG) show a composition bias toward polar residues. A disordered region spans residues 28 to 51 (VASSTERSSPSTAGLSARPSPGPT). The helical transmembrane segment at 81-101 (LINALLVVVATFFYLVYLCFF) threads the bilayer. Residues 102–110 (KFVDEVVHA) are Intravirion-facing.

It belongs to the herpesviridae glycoprotein N family. Interacts (via N-terminus) with gM (via N-terminus). The gM-gN heterodimer forms the gCII complex. O-glycosylated. Contains alpha 2,6-sialic acid residues. N-glycosylated.

The protein localises to the virion membrane. The protein resides in the host membrane. It is found in the host Golgi apparatus. Its subcellular location is the host trans-Golgi network. In terms of biological role, envelope glycoprotein necessary for proper maturation of gM and modulation of its membrane fusion activity. Also plays a critical role in virion morphogenesis. The chain is Envelope glycoprotein N from Homo sapiens (Human).